Consider the following 406-residue polypeptide: Cysteine desulfurase (406 aa).

Lys-226 is modified (N6-(pyridoxal phosphate)lysine). Cys-364 serves as the catalytic Cysteine persulfide intermediate.

This sequence belongs to the class-V pyridoxal-phosphate-dependent aminotransferase family. Csd subfamily. Homodimer. Interacts with SufE and the SufBCD complex composed of SufB, SufC and SufD. The interaction with SufE is required to mediate the direct transfer of the sulfur atom from the S-sulfanylcysteine. Requires pyridoxal 5'-phosphate as cofactor.

The protein localises to the cytoplasm. The catalysed reaction is (sulfur carrier)-H + L-cysteine = (sulfur carrier)-SH + L-alanine. It catalyses the reaction L-selenocysteine + AH2 = hydrogenselenide + L-alanine + A + H(+). Its pathway is cofactor biosynthesis; iron-sulfur cluster biosynthesis. Functionally, cysteine desulfurases mobilize the sulfur from L-cysteine to yield L-alanine, an essential step in sulfur metabolism for biosynthesis of a variety of sulfur-containing biomolecules. Component of the suf operon, which is activated and required under specific conditions such as oxidative stress and iron limitation. Acts as a potent selenocysteine lyase in vitro, that mobilizes selenium from L-selenocysteine. Selenocysteine lyase activity is however unsure in vivo. The polypeptide is Cysteine desulfurase (Escherichia coli O45:K1 (strain S88 / ExPEC)).